A 578-amino-acid polypeptide reads, in one-letter code: Threonylcarbamoyladenosine tRNA methylthiotransferase (578 aa).

The MTTase N-terminal domain occupies 63–171; it reads QKIWIRTWGC…VVEVVEETIK (109 aa). Positions 72 and 108 each coordinate [4Fe-4S] cluster. S121 bears the Phosphoserine mark. The [4Fe-4S] cluster site is built by C137, C213, C217, and C220. Residues 199–430 enclose the Radical SAM core domain; sequence RKNPLIEIIS…RVFHSYNPYD (232 aa). One can recognise a TRAM domain in the interval 430–492; it reads DHKIGERQQV…KHFLKGQPVS (63 aa). The residue at position 498 (T498) is a Phosphothreonine. Residues 553 to 570 traverse the membrane as a helical segment; it reads CALKVATGLALLALLLHF.

Belongs to the methylthiotransferase family. CDKAL1 subfamily. [4Fe-4S] cluster is required as a cofactor. As to expression, expressed in pancreas, liver and skeletal muscle, especially in white muscle fibers.

The protein resides in the endoplasmic reticulum membrane. The catalysed reaction is N(6)-L-threonylcarbamoyladenosine(37) in tRNA + (sulfur carrier)-SH + AH2 + 2 S-adenosyl-L-methionine = 2-methylsulfanyl-N(6)-L-threonylcarbamoyladenosine(37) in tRNA + (sulfur carrier)-H + 5'-deoxyadenosine + L-methionine + A + S-adenosyl-L-homocysteine + 2 H(+). Its function is as follows. Catalyzes the methylthiolation of N6-threonylcarbamoyladenosine (t(6)A), leading to the formation of 2-methylthio-N6-threonylcarbamoyladenosine (ms(2)t(6)A) at position 37 in tRNAs that read codons beginning with adenine. This chain is Threonylcarbamoyladenosine tRNA methylthiotransferase (Cdkal1), found in Mus musculus (Mouse).